Consider the following 199-residue polypeptide: Pyridoxal 5'-phosphate synthase subunit PdxT (199 aa).

Residue 52 to 54 (GES) coordinates L-glutamine. The active-site Nucleophile is the cysteine 84. L-glutamine is bound by residues arginine 115 and 143 to 144 (IR). Active-site charge relay system residues include histidine 179 and glutamate 181.

This sequence belongs to the glutaminase PdxT/SNO family. As to quaternary structure, in the presence of PdxS, forms a dodecamer of heterodimers. Only shows activity in the heterodimer.

The catalysed reaction is aldehydo-D-ribose 5-phosphate + D-glyceraldehyde 3-phosphate + L-glutamine = pyridoxal 5'-phosphate + L-glutamate + phosphate + 3 H2O + H(+). It carries out the reaction L-glutamine + H2O = L-glutamate + NH4(+). It functions in the pathway cofactor biosynthesis; pyridoxal 5'-phosphate biosynthesis. Its function is as follows. Catalyzes the hydrolysis of glutamine to glutamate and ammonia as part of the biosynthesis of pyridoxal 5'-phosphate. The resulting ammonia molecule is channeled to the active site of PdxS. This Methanosarcina mazei (strain ATCC BAA-159 / DSM 3647 / Goe1 / Go1 / JCM 11833 / OCM 88) (Methanosarcina frisia) protein is Pyridoxal 5'-phosphate synthase subunit PdxT.